Here is a 560-residue protein sequence, read N- to C-terminus: OTU domain-containing protein 5-A (560 aa).

2 disordered regions span residues 1-100 and 141-190; these read MTIL…MACV and GGGT…QSED. A compositionally biased stretch (basic and acidic residues) spans 17–32; the sequence is DHPDDPDRRTGSDPHQ. The span at 141-163 shows a compositional bias: gly residues; that stretch reads GGGTGPGAAGGGGGGGGGGGVGG. One can recognise an OTU domain in the interval 211-334; it reads FVIKKMKEDG…NIHYNSVVNP (124 aa). Positions 216–222 are cys-loop; it reads MKEDGAC. D219 is an active-site residue. Residue C222 is the Nucleophile of the active site. Residues 271–281 are variable-loop; sequence KRKNNCHGNHI. The segment at 322-327 is his-loop; sequence YHRNIH. Residue H327 is part of the active site. A disordered region spans residues 411 to 496; sequence ARQPRKASAT…ACVGPDRPTS (86 aa). Composition is skewed to low complexity over residues 417 to 430 and 437 to 448; these read ASAT…AASS and ARSPRQRSSAPS.

It belongs to the peptidase C85 family.

It carries out the reaction Thiol-dependent hydrolysis of ester, thioester, amide, peptide and isopeptide bonds formed by the C-terminal Gly of ubiquitin (a 76-residue protein attached to proteins as an intracellular targeting signal).. In terms of biological role, deubiquitinating enzyme that may function as negative regulator of the innate immune system. Has peptidase activity towards 'Lys-48'- and 'Lys-63'-linked polyubiquitin chains. Can also cleave 'Lys-11'-linked ubiquitin chains (in vitro). This chain is OTU domain-containing protein 5-A (otud5a), found in Danio rerio (Zebrafish).